Consider the following 329-residue polypeptide: 4-hydroxythreonine-4-phosphate dehydrogenase (329 aa).

The substrate site is built by H136 and T137. A divalent metal cation is bound by residues H166, H211, and H266. Positions 274, 283, and 292 each coordinate substrate.

It belongs to the PdxA family. As to quaternary structure, homodimer. Zn(2+) serves as cofactor. It depends on Mg(2+) as a cofactor. The cofactor is Co(2+).

The protein resides in the cytoplasm. It catalyses the reaction 4-(phosphooxy)-L-threonine + NAD(+) = 3-amino-2-oxopropyl phosphate + CO2 + NADH. It participates in cofactor biosynthesis; pyridoxine 5'-phosphate biosynthesis; pyridoxine 5'-phosphate from D-erythrose 4-phosphate: step 4/5. In terms of biological role, catalyzes the NAD(P)-dependent oxidation of 4-(phosphooxy)-L-threonine (HTP) into 2-amino-3-oxo-4-(phosphooxy)butyric acid which spontaneously decarboxylates to form 3-amino-2-oxopropyl phosphate (AHAP). The protein is 4-hydroxythreonine-4-phosphate dehydrogenase of Escherichia coli O7:K1 (strain IAI39 / ExPEC).